The following is a 367-amino-acid chain: 2-aminoethylphosphonate--pyruvate transaminase (367 aa).

N6-(pyridoxal phosphate)lysine is present on K194.

It belongs to the class-V pyridoxal-phosphate-dependent aminotransferase family. PhnW subfamily. Homodimer. It depends on pyridoxal 5'-phosphate as a cofactor.

The enzyme catalyses (2-aminoethyl)phosphonate + pyruvate = phosphonoacetaldehyde + L-alanine. Involved in phosphonate degradation. The protein is 2-aminoethylphosphonate--pyruvate transaminase of Salmonella choleraesuis (strain SC-B67).